Here is a 256-residue protein sequence, read N- to C-terminus: Imidazole glycerol phosphate synthase subunit HisF (256 aa).

Residues aspartate 11 and aspartate 130 contribute to the active site.

Belongs to the HisA/HisF family. Heterodimer of HisH and HisF.

The protein resides in the cytoplasm. The catalysed reaction is 5-[(5-phospho-1-deoxy-D-ribulos-1-ylimino)methylamino]-1-(5-phospho-beta-D-ribosyl)imidazole-4-carboxamide + L-glutamine = D-erythro-1-(imidazol-4-yl)glycerol 3-phosphate + 5-amino-1-(5-phospho-beta-D-ribosyl)imidazole-4-carboxamide + L-glutamate + H(+). It functions in the pathway amino-acid biosynthesis; L-histidine biosynthesis; L-histidine from 5-phospho-alpha-D-ribose 1-diphosphate: step 5/9. Functionally, IGPS catalyzes the conversion of PRFAR and glutamine to IGP, AICAR and glutamate. The HisF subunit catalyzes the cyclization activity that produces IGP and AICAR from PRFAR using the ammonia provided by the HisH subunit. The chain is Imidazole glycerol phosphate synthase subunit HisF from Thioalkalivibrio sulfidiphilus (strain HL-EbGR7).